The sequence spans 439 residues: Ornithine aminotransferase, mitochondrial (439 aa).

The N-terminal 35 residues, 1 to 35, are a transit peptide targeting the mitochondrion; that stretch reads MLSKLASLQTVAALRRGLRTSVASATSVATKKTEQ. N6-acetyllysine occurs at positions 49 and 66. Lys-102 carries the post-translational modification N6-succinyllysine. Lys-107 is subject to N6-acetyllysine; alternate. Lys-107 carries the post-translational modification N6-succinyllysine; alternate. Lys-292 carries the post-translational modification N6-(pyridoxal phosphate)lysine. Lys-362 bears the N6-acetyllysine; alternate mark. An N6-succinyllysine; alternate modification is found at Lys-362. 2 positions are modified to N6-acetyllysine: Lys-386 and Lys-392. N6-acetyllysine; alternate is present on Lys-405. Lys-405 bears the N6-succinyllysine; alternate mark. Position 421 is an N6-acetyllysine (Lys-421).

Homohexamer. It depends on pyridoxal 5'-phosphate as a cofactor. As to expression, expressed in the head and flagellum of epididymal sperm but not in testicular sperm (at protein level).

The protein localises to the mitochondrion matrix. It catalyses the reaction L-ornithine + 2-oxoglutarate = L-glutamate 5-semialdehyde + L-glutamate. It functions in the pathway amino-acid biosynthesis; L-proline biosynthesis; L-glutamate 5-semialdehyde from L-ornithine: step 1/1. Its function is as follows. Catalyzes the reversible interconversion of L-ornithine and 2-oxoglutarate to L-glutamate semialdehyde and L-glutamate. In Rattus norvegicus (Rat), this protein is Ornithine aminotransferase, mitochondrial (Oat).